The following is a 387-amino-acid chain: Aminodeoxyfutalosine synthase (387 aa).

Residues Val-52 to Glu-279 form the Radical SAM core domain. Residues Cys-66, Cys-70, and Cys-73 each coordinate [4Fe-4S] cluster.

The protein belongs to the radical SAM superfamily. MqnE family. It depends on [4Fe-4S] cluster as a cofactor.

The catalysed reaction is 3-[(1-carboxyvinyl)-oxy]benzoate + S-adenosyl-L-methionine + H2O = 6-amino-6-deoxyfutalosine + hydrogencarbonate + L-methionine + H(+). Its pathway is quinol/quinone metabolism; menaquinone biosynthesis. Functionally, radical SAM enzyme that catalyzes the addition of the adenosyl radical to the double bond of 3-[(1-carboxyvinyl)oxy]benzoate, leading to aminodeoxyfutalosine (AFL), a key intermediate in the formation of menaquinone (MK, vitamin K2) from chorismate. The protein is Aminodeoxyfutalosine synthase of Streptomyces coelicolor (strain ATCC BAA-471 / A3(2) / M145).